Consider the following 577-residue polypeptide: Scoloptoxin SSD14 (577 aa).

The signal sequence occupies residues 1–25 (MGTSYRKLGYVLFLMLGMIVEEGIA).

As to quaternary structure, heterodimer composed of subunits alpha and beta; probably disulfide-linked. In terms of tissue distribution, expressed by the venom gland.

Its subcellular location is the secreted. In terms of biological role, dose-dependently induces human platelet aggregation on both plasma rich platelet and washed platelet (max. response at 3.2 ug/mL) and causes hemolysis against mouse and rabbit erythrocytes (35 and 65% respectively at 5 ug/mL). Does not show hemolytic activity against human erythrocytes (even at 100 ug/mL). The protein is Scoloptoxin SSD14 of Scolopendra dehaani (Thai centipede).